Here is a 313-residue protein sequence, read N- to C-terminus: Glutaminase (313 aa).

Substrate contacts are provided by S64, N116, E163, N170, Y194, Y246, and V264.

Belongs to the glutaminase family. In terms of assembly, homotetramer.

It carries out the reaction L-glutamine + H2O = L-glutamate + NH4(+). This is Glutaminase from Exiguobacterium sp. (strain ATCC BAA-1283 / AT1b).